A 670-amino-acid chain; its full sequence is ATP-dependent DNA helicase Rep (670 aa).

The 277-residue stretch at methionine 1 to serine 277 folds into the UvrD-like helicase ATP-binding domain. ATP contacts are provided by residues alanine 22–threonine 29 and arginine 275. The region spanning glycine 278–glycine 562 is the UvrD-like helicase C-terminal domain.

Belongs to the helicase family. UvrD subfamily. As to quaternary structure, homodimer.

The catalysed reaction is Couples ATP hydrolysis with the unwinding of duplex DNA by translocating in the 3'-5' direction.. The enzyme catalyses ATP + H2O = ADP + phosphate + H(+). In terms of biological role, rep helicase is a single-stranded DNA-dependent ATPase involved in DNA replication; it can initiate unwinding at a nick in the DNA. It binds to the single-stranded DNA and acts in a progressive fashion along the DNA in the 3' to 5' direction. This chain is ATP-dependent DNA helicase Rep, found in Buchnera aphidicola subsp. Baizongia pistaciae (strain Bp).